The sequence spans 238 residues: Flagellar L-ring protein (238 aa).

An N-terminal signal peptide occupies residues 1–16; that stretch reads MNKAILAVAMVLLLAG. Cys-17 is lipidated: N-palmitoyl cysteine. Cys-17 carries the S-diacylglycerol cysteine lipid modification.

Belongs to the FlgH family. As to quaternary structure, the basal body constitutes a major portion of the flagellar organelle and consists of four rings (L,P,S, and M) mounted on a central rod.

It is found in the cell outer membrane. The protein localises to the bacterial flagellum basal body. Assembles around the rod to form the L-ring and probably protects the motor/basal body from shearing forces during rotation. In Brucella canis (strain ATCC 23365 / NCTC 10854 / RM-666), this protein is Flagellar L-ring protein.